Here is a 158-residue protein sequence, read N- to C-terminus: Transcription elongation factor GreA (158 aa).

The stretch at 47-68 forms a coiled coil; that stretch reads AEYDAAKEAQGLLELKIKKMEE.

It belongs to the GreA/GreB family.

Its function is as follows. Necessary for efficient RNA polymerase transcription elongation past template-encoded arresting sites. The arresting sites in DNA have the property of trapping a certain fraction of elongating RNA polymerases that pass through, resulting in locked ternary complexes. Cleavage of the nascent transcript by cleavage factors such as GreA or GreB allows the resumption of elongation from the new 3'terminus. GreA releases sequences of 2 to 3 nucleotides. The chain is Transcription elongation factor GreA from Flavobacterium psychrophilum (strain ATCC 49511 / DSM 21280 / CIP 103535 / JIP02/86).